We begin with the raw amino-acid sequence, 884 residues long: Alanine--tRNA ligase (884 aa).

His-562, His-566, Cys-676, and His-680 together coordinate Zn(2+).

The protein belongs to the class-II aminoacyl-tRNA synthetase family. Requires Zn(2+) as cofactor.

It is found in the cytoplasm. The enzyme catalyses tRNA(Ala) + L-alanine + ATP = L-alanyl-tRNA(Ala) + AMP + diphosphate. Its function is as follows. Catalyzes the attachment of alanine to tRNA(Ala) in a two-step reaction: alanine is first activated by ATP to form Ala-AMP and then transferred to the acceptor end of tRNA(Ala). Also edits incorrectly charged Ser-tRNA(Ala) and Gly-tRNA(Ala) via its editing domain. This chain is Alanine--tRNA ligase, found in Jannaschia sp. (strain CCS1).